The following is a 435-amino-acid chain: Protein lin-54 (435 aa).

The segment at 73-136 is disordered; that stretch reads DEPIDTSSHR…PASLPRTVQP (64 aa). A compositionally biased stretch (polar residues) spans 102 to 120; sequence TPGSSQYTVRNLSNLSGSP. The 116-residue stretch at 173-288 folds into the CRC domain; the sequence is QRKPCNCTKS…KCKGCQNTET (116 aa). The segment at 175–188 is DNA-binding; the sequence is KPCNCTKSQCLKLY. Residues Cys-177, Cys-179, Cys-184, Cys-189, Cys-191, Cys-198, Cys-201, Cys-203, and Cys-206 each contribute to the Zn(2+) site. Residues 235–250 are linker; that stretch reads IGIARGGITDIERLHQ. Zn(2+)-binding residues include Cys-253, Cys-255, Cys-260, Cys-265, Cys-267, Cys-274, Cys-278, Cys-280, and Cys-283. The DNA-binding stretch occupies residues 253-266; that stretch reads CHCKKSGCLKNYCE. The interval 415-435 is disordered; the sequence is LTQDLDAAPTDDIPGPSTSTS.

This sequence belongs to the lin-54 family. Component of the DRM complex, at least composed of lin-9, lin-35, lin-37, lin-52, lin-53, lin-54- dpl-1 and efl-1.

It is found in the nucleus. Its subcellular location is the chromosome. Synthetic multivulva class B (synMuvB) protein. SynMuvB proteins are required to repress the induction of vulval development by Ras signaling and probably act by forming the multiprotein DRM complex that repress transcription. This chain is Protein lin-54, found in Caenorhabditis elegans.